A 138-amino-acid polypeptide reads, in one-letter code: Small ribosomal subunit protein uS9c (138 aa).

It belongs to the universal ribosomal protein uS9 family.

It is found in the plastid. The protein resides in the chloroplast. This is Small ribosomal subunit protein uS9c (rps9) from Phaeodactylum tricornutum (strain CCAP 1055/1).